The primary structure comprises 478 residues: Serine/threonine-protein phosphatase 2A activator 1 (478 aa).

Positions 359–478 are disordered; sequence DPSAIPPPSR…DITTKAPWAK (120 aa). Residues 396–419 show a composition bias toward low complexity; it reads APWATASQSTPPPSTGTAAPWATS.

Belongs to the PTPA-type PPIase family.

It is found in the cytoplasm. It localises to the nucleus. It carries out the reaction [protein]-peptidylproline (omega=180) = [protein]-peptidylproline (omega=0). Its function is as follows. PPIases accelerate the folding of proteins. It catalyzes the cis-trans isomerization of proline imidic peptide bonds in oligopeptides. Acts as a regulatory subunit for PP2A-like phosphatases modulating their activity or substrate specificity, probably by inducing a conformational change in the catalytic subunit, a direct target of the PPIase. Can reactivate inactive phosphatase PP2A-phosphatase methylesterase complexes (PP2Ai) in presence of ATP and Mg(2+) by dissociating the inactive form from the complex. In Aspergillus oryzae (strain ATCC 42149 / RIB 40) (Yellow koji mold), this protein is Serine/threonine-protein phosphatase 2A activator 1 (rrd1).